The chain runs to 45 residues: Bacteriocin fulvocin-C (45 aa).

In terms of biological role, bacteriocin. The sequence is that of Bacteriocin fulvocin-C from Myxococcus fulvus.